The following is a 98-amino-acid chain: Large ribosomal subunit protein mL53 (98 aa).

The protein belongs to the mitochondrion-specific ribosomal protein mL53 family. As to quaternary structure, component of the mitochondrial large ribosomal subunit (mt-LSU). Mature N.crassa 74S mitochondrial ribosomes consist of a small (37S) and a large (54S) subunit. The 37S small subunit contains a 16S ribosomal RNA (16S mt-rRNA) and 32 different proteins. The 54S large subunit contains a 23S rRNA (23S mt-rRNA) and 42 different proteins.

It is found in the mitochondrion. In terms of biological role, component of the mitochondrial ribosome (mitoribosome), a dedicated translation machinery responsible for the synthesis of mitochondrial genome-encoded proteins, including at least some of the essential transmembrane subunits of the mitochondrial respiratory chain. The mitoribosomes are attached to the mitochondrial inner membrane and translation products are cotranslationally integrated into the membrane. In Neurospora crassa (strain ATCC 24698 / 74-OR23-1A / CBS 708.71 / DSM 1257 / FGSC 987), this protein is Large ribosomal subunit protein mL53 (mrpl44).